We begin with the raw amino-acid sequence, 437 residues long: Enolase (437 aa).

Glutamine 162 contributes to the (2R)-2-phosphoglycerate binding site. The active-site Proton donor is the glutamate 204. The Mg(2+) site is built by aspartate 251, glutamate 297, and aspartate 324. Residues lysine 349, arginine 378, serine 379, and lysine 400 each coordinate (2R)-2-phosphoglycerate. The Proton acceptor role is filled by lysine 349.

This sequence belongs to the enolase family. Requires Mg(2+) as cofactor.

The protein resides in the cytoplasm. The protein localises to the secreted. It localises to the cell surface. It carries out the reaction (2R)-2-phosphoglycerate = phosphoenolpyruvate + H2O. It participates in carbohydrate degradation; glycolysis; pyruvate from D-glyceraldehyde 3-phosphate: step 4/5. Functionally, catalyzes the reversible conversion of 2-phosphoglycerate (2-PG) into phosphoenolpyruvate (PEP). It is essential for the degradation of carbohydrates via glycolysis. In Chlorobium chlorochromatii (strain CaD3), this protein is Enolase.